The primary structure comprises 207 residues: Ribosomal RNA small subunit methyltransferase G (207 aa).

S-adenosyl-L-methionine contacts are provided by residues glycine 74, leucine 79, 125 to 126 (VE), and arginine 140.

The protein belongs to the methyltransferase superfamily. RNA methyltransferase RsmG family.

The protein localises to the cytoplasm. The catalysed reaction is guanosine(527) in 16S rRNA + S-adenosyl-L-methionine = N(7)-methylguanosine(527) in 16S rRNA + S-adenosyl-L-homocysteine. Specifically methylates the N7 position of guanine in position 527 of 16S rRNA. The protein is Ribosomal RNA small subunit methyltransferase G of Shewanella pealeana (strain ATCC 700345 / ANG-SQ1).